Here is a 1023-residue protein sequence, read N- to C-terminus: Probable beta-glucosidase E (1023 aa).

The segment at M1–L51 is disordered. At M1 to R128 the chain is on the cytoplasmic side. The segment covering S11 to E45 has biased composition (basic and acidic residues). The chain crosses the membrane as a helical; Signal-anchor for type II membrane protein span at residues T129–S149. Over T150–P1023 the chain is Extracellular. Residues N199 and N387 are each glycosylated (N-linked (GlcNAc...) asparagine). The active site involves D415. N458 and N497 each carry an N-linked (GlcNAc...) asparagine glycan. Disordered regions lie at residues W485–G515 and N822–D841. The segment covering P827–P838 has biased composition (low complexity). The N-linked (GlcNAc...) asparagine glycan is linked to N848. The tract at residues A873 to S909 is disordered. N964 and N979 each carry an N-linked (GlcNAc...) asparagine glycan.

Belongs to the glycosyl hydrolase 3 family.

The protein localises to the cell membrane. It catalyses the reaction Hydrolysis of terminal, non-reducing beta-D-glucosyl residues with release of beta-D-glucose.. It functions in the pathway glycan metabolism; cellulose degradation. Beta-glucosidases are one of a number of cellulolytic enzymes involved in the degradation of cellulosic biomass. Catalyzes the last step releasing glucose from the inhibitory cellobiose. The sequence is that of Probable beta-glucosidase E (bglE) from Emericella nidulans (strain FGSC A4 / ATCC 38163 / CBS 112.46 / NRRL 194 / M139) (Aspergillus nidulans).